The chain runs to 91 residues: Cell division protein FtsB (91 aa).

The Cytoplasmic segment spans residues 1–3; sequence MKW. Residues 4–21 form a helical membrane-spanning segment; that stretch reads LVAVLVVFVAMFQYRLWV. At 22 to 91 the chain is on the periplasmic side; that stretch reads GEGSIADVVR…ETFFMIIDDQ (70 aa). The stretch at 23–63 forms a coiled coil; it reads EGSIADVVRLEREIARQEADNERLRERNKQLAAEVDALKTG.

It belongs to the FtsB family. Part of a complex composed of FtsB, FtsL and FtsQ.

The protein localises to the cell inner membrane. Its function is as follows. Essential cell division protein. May link together the upstream cell division proteins, which are predominantly cytoplasmic, with the downstream cell division proteins, which are predominantly periplasmic. In Teredinibacter turnerae (strain ATCC 39867 / T7901), this protein is Cell division protein FtsB.